The following is a 274-amino-acid chain: Dermonecrotic toxin LarSicTox-alphaIB2bii (274 aa).

The active site involves H3. Residues E23 and D25 each coordinate Mg(2+). H39 serves as the catalytic Nucleophile. Disulfide bonds link C43/C49 and C45/C188. Position 83 (D83) interacts with Mg(2+). N-linked (GlcNAc...) asparagine glycosylation occurs at N251.

It belongs to the arthropod phospholipase D family. Class II subfamily. Mg(2+) serves as cofactor. Expressed by the venom gland.

Its subcellular location is the secreted. It catalyses the reaction an N-(acyl)-sphingosylphosphocholine = an N-(acyl)-sphingosyl-1,3-cyclic phosphate + choline. The catalysed reaction is an N-(acyl)-sphingosylphosphoethanolamine = an N-(acyl)-sphingosyl-1,3-cyclic phosphate + ethanolamine. It carries out the reaction a 1-acyl-sn-glycero-3-phosphocholine = a 1-acyl-sn-glycero-2,3-cyclic phosphate + choline. The enzyme catalyses a 1-acyl-sn-glycero-3-phosphoethanolamine = a 1-acyl-sn-glycero-2,3-cyclic phosphate + ethanolamine. Functionally, dermonecrotic toxins cleave the phosphodiester linkage between the phosphate and headgroup of certain phospholipids (sphingolipid and lysolipid substrates), forming an alcohol (often choline) and a cyclic phosphate. This toxin acts on sphingomyelin (SM). It may also act on ceramide phosphoethanolamine (CPE), lysophosphatidylcholine (LPC) and lysophosphatidylethanolamine (LPE), but not on lysophosphatidylserine (LPS), and lysophosphatidylglycerol (LPG). It acts by transphosphatidylation, releasing exclusively cyclic phosphate products as second products. Induces dermonecrosis, hemolysis, increased vascular permeability, edema, inflammatory response, and platelet aggregation. The polypeptide is Dermonecrotic toxin LarSicTox-alphaIB2bii (Loxosceles arizonica (Arizona brown spider)).